The primary structure comprises 440 residues: Polycomb group protein VERNALIZATION 2 (440 aa).

A C2H2-type zinc finger spans residues 86–111; it reads EDCSCPFCSMLCGSFKGLQFHLNSSH. A Nuclear localization signal motif is present at residues 156–163; the sequence is KPRKRRQR. The tract at residues 267-345 is VEFS-box; the sequence is RQFYHSHRVQ…GHISWACEVF (79 aa). The disordered stretch occupies residues 398–440; it reads NNNNNSVDHPSDSNTNNNNIVDHPNDIKNKNNVDNKDNNSRDK. Residues 420-440 show a composition bias toward basic and acidic residues; sequence HPNDIKNKNNVDNKDNNSRDK.

Belongs to the VEFS (VRN2-EMF2-FIS2-SU(Z)12) family. As to quaternary structure, probable component of a PcG complex. In plants, PcG complexes are probably composed of a member of the EZ family (CLF or MEA), FIE, and a member of the VEFS family (FIS2, VRN2 or EMF2). Component of the plant homeodomain / polycomb repressive complex 2 (PHD-PRC2) large complex during prolonged cold, composed of core PRC2 components (VRN2, EZA1, FIE and MSI1), and three related PHD finger proteins (VIL1, VIL2 and VIN3) that mediates histone H3 trimethylation on 'Lys-27' (H3K27me3). Binds to ALP1. In terms of tissue distribution, weakly expressed. Expressed both during, and in the absence of vernalization.

It localises to the nucleus. Its function is as follows. Polycomb group (PcG) protein. Plays a central role in vernalization by maintaining repressed the homeotic gene FLC, a floral repressor, after a cold treatment. PcG proteins act by forming multiprotein complexes, which are required to maintain the transcriptionally repressive state of homeotic genes throughout development. PcG proteins are not required to initiate repression, but to maintain it during later stages of development. They probably act via the methylation of histones, rendering chromatin heritably changed in its expressibility. Associates constitutively along the whole FLC locus. The sequence is that of Polycomb group protein VERNALIZATION 2 (VRN2) from Arabidopsis thaliana (Mouse-ear cress).